Here is a 262-residue protein sequence, read N- to C-terminus: Carbonic anhydrase 13 (262 aa).

Residues 4–261 (LSWGYREHNG…LKGRKVRASF (258 aa)) enclose the Alpha-carbonic anhydrase domain. Residue His-65 is the Proton donor/acceptor of the active site. Zn(2+) is bound by residues His-95, His-97, and His-120. 200-201 (TV) contributes to the substrate binding site.

It belongs to the alpha-carbonic anhydrase family. It depends on Zn(2+) as a cofactor. Expressed in thymus, small intestine, spleen, prostate, ovary, colon and testis.

The catalysed reaction is hydrogencarbonate + H(+) = CO2 + H2O. Its activity is regulated as follows. Inhibited by acetazolamide. Its function is as follows. Reversible hydration of carbon dioxide. The sequence is that of Carbonic anhydrase 13 (CA13) from Homo sapiens (Human).